We begin with the raw amino-acid sequence, 427 residues long: Serine hydroxymethyltransferase (427 aa).

120 to 122 (GHI) contacts (6S)-5,6,7,8-tetrahydrofolate. Position 226 is an N6-(pyridoxal phosphate)lysine (lysine 226). Residue glutamate 243 participates in (6S)-5,6,7,8-tetrahydrofolate binding.

The protein belongs to the SHMT family. As to quaternary structure, homodimer. Pyridoxal 5'-phosphate is required as a cofactor.

It is found in the cytoplasm. The protein operates within amino-acid biosynthesis; glycine biosynthesis; glycine from L-serine: step 1/1. Functionally, catalyzes the reversible interconversion of serine and glycine with a modified folate serving as the one-carbon carrier. Also exhibits a pteridine-independent aldolase activity toward beta-hydroxyamino acids, producing glycine and aldehydes, via a retro-aldol mechanism. The chain is Serine hydroxymethyltransferase from Thermococcus gammatolerans (strain DSM 15229 / JCM 11827 / EJ3).